A 478-amino-acid chain; its full sequence is Alcohol dehydrogenase (quinone), cytochrome c subunit (478 aa).

Positions 1–36 (MLNALTRDRLVSEMKQGWKLAAAIGLMAVSFGAAHA) are cleaved as a signal peptide. The residue at position 37 (Gln-37) is a Pyrrolidone carboxylic acid. Cytochrome c domains lie at 42-145 (ALIK…MHGV), 189-304 (PEVA…KSMP), and 327-417 (GQGN…RKGW). Heme c is bound by residues Cys-56, Cys-59, His-60, Cys-204, Cys-207, His-208, Cys-340, Cys-343, and His-344.

The alcohol dehydrogenase multicomponent enzyme system is composed of a dehydrogenase subunit I (AdhA), a cytochrome c subunit II (AdhB) and a subunit III (AdhS). The cofactor is heme c.

The protein localises to the cell membrane. The enzyme catalyses ethanol + a ubiquinone = a ubiquinol + acetaldehyde. Its activity is regulated as follows. 2,6-dichloro-4-dicyanovinylphenol (PC16) and antimycin A inhibit ubiquinol oxidation activity more selectively than the ubiquinone reductase activity. Cytochrome c component of the alcohol dehydrogenase multicomponent enzyme system which is involved in the production of acetic acid and in the ethanol oxidase respiratory chain. Quinohemoprotein alcohol dehydrogenase (ADH) catalyzes the oxidation of ethanol to acetaldehyde by transferring electrons to the ubiquinone embedded in the membrane phospholipids. The electrons transfer from ethanol to membranous ubiquinone occurs from pyrroloquinoline quinone (PQQ) to one heme c in subunit I (AdhA), and finally to two heme c in subunit II (AdhB). Besides ubiquinone reduction, ADH also has a ubiquinol (QH2) oxidation reaction which mediates electron transfer from ubiquinol to the non-energy generating bypass oxidase system. The electrons transfer occurs from ubiquinol (QH2) to the additional heme c within subunit II (AdhB). Also able to use quinone analogs such as 2,3-dimethoxy-5-methyl-6-n-decyl-1,4-benzoquinone (DB) and 2,3-dimethoxy-5-methyl-6-n-pentyl-1,4-benzoquinone (PB). The protein is Alcohol dehydrogenase (quinone), cytochrome c subunit of Gluconobacter oxydans (strain 621H) (Gluconobacter suboxydans).